The following is a 242-amino-acid chain: DNA repair protein RecO (242 aa).

This sequence belongs to the RecO family. Monomer.

Its function is as follows. Involved in DNA repair and RecF pathway recombination. The protein is DNA repair protein RecO of Salmonella agona (strain SL483).